Here is a 228-residue protein sequence, read N- to C-terminus: Demethylmenaquinone methyltransferase (228 aa).

Residues threonine 62, aspartate 80, 100-101 (DA), and serine 117 contribute to the S-adenosyl-L-methionine site.

The protein belongs to the class I-like SAM-binding methyltransferase superfamily. MenG/UbiE family.

The enzyme catalyses a 2-demethylmenaquinol + S-adenosyl-L-methionine = a menaquinol + S-adenosyl-L-homocysteine + H(+). It participates in quinol/quinone metabolism; menaquinone biosynthesis; menaquinol from 1,4-dihydroxy-2-naphthoate: step 2/2. In terms of biological role, methyltransferase required for the conversion of demethylmenaquinol (DMKH2) to menaquinol (MKH2). The polypeptide is Demethylmenaquinone methyltransferase (Mycolicibacterium vanbaalenii (strain DSM 7251 / JCM 13017 / BCRC 16820 / KCTC 9966 / NRRL B-24157 / PYR-1) (Mycobacterium vanbaalenii)).